Consider the following 307-residue polypeptide: Glutathione synthetase (307 aa).

In terms of domain architecture, ATP-grasp spans 120–304; it reads KLGALRFSRW…LADQTIERLR (185 aa). An ATP-binding site is contributed by 146 to 202; the sequence is AREQGDVVLKPLGGRAGLGVIRVQAEAPGLKALLELVTEQERLPVMAQRFLPDVTEG. Mg(2+) is bound by residues Glu-275 and Asn-277.

The protein belongs to the prokaryotic GSH synthase family. It depends on Mg(2+) as a cofactor. Mn(2+) is required as a cofactor.

It catalyses the reaction gamma-L-glutamyl-L-cysteine + glycine + ATP = glutathione + ADP + phosphate + H(+). Its pathway is sulfur metabolism; glutathione biosynthesis; glutathione from L-cysteine and L-glutamate: step 2/2. The protein is Glutathione synthetase of Parasynechococcus marenigrum (strain WH8102).